Consider the following 207-residue polypeptide: Urease accessory protein UreE (207 aa).

Positions 170 to 194 are enriched in basic and acidic residues; that stretch reads EHHGHSHSHSHDHDHDHDHDHDHQH. A disordered region spans residues 170–207; sequence EHHGHSHSHSHDHDHDHDHDHDHQHGPCCSHGHHHGHR.

Belongs to the UreE family.

The protein localises to the cytoplasm. Involved in urease metallocenter assembly. Binds nickel. Probably functions as a nickel donor during metallocenter assembly. The chain is Urease accessory protein UreE from Burkholderia pseudomallei (strain 1106a).